Reading from the N-terminus, the 81-residue chain is ATP synthase subunit c (81 aa).

Helical transmembrane passes span 6–26 (AAASVIAAALAVGLGAIGPGI) and 57–77 (LAFMESLTIYGLVIALVLLFA).

The protein belongs to the ATPase C chain family. F-type ATPases have 2 components, F(1) - the catalytic core - and F(0) - the membrane proton channel. F(1) has five subunits: alpha(3), beta(3), gamma(1), delta(1), epsilon(1). F(0) has four main subunits: a(1), b(1), b'(1) and c(10-14). The alpha and beta chains form an alternating ring which encloses part of the gamma chain. F(1) is attached to F(0) by a central stalk formed by the gamma and epsilon chains, while a peripheral stalk is formed by the delta, b and b' chains.

It is found in the cellular thylakoid membrane. Its function is as follows. F(1)F(0) ATP synthase produces ATP from ADP in the presence of a proton or sodium gradient. F-type ATPases consist of two structural domains, F(1) containing the extramembraneous catalytic core and F(0) containing the membrane proton channel, linked together by a central stalk and a peripheral stalk. During catalysis, ATP synthesis in the catalytic domain of F(1) is coupled via a rotary mechanism of the central stalk subunits to proton translocation. Functionally, key component of the F(0) channel; it plays a direct role in translocation across the membrane. A homomeric c-ring of between 10-14 subunits forms the central stalk rotor element with the F(1) delta and epsilon subunits. This is ATP synthase subunit c from Synechocystis sp. (strain ATCC 27184 / PCC 6803 / Kazusa).